Here is a 674-residue protein sequence, read N- to C-terminus: Polyunsaturated fatty acid 5-lipoxygenase (674 aa).

In terms of domain architecture, PLAT spans Pro-2–Lys-118. Gly-17, Thr-18, Asp-19, Asn-44, Asp-45, Glu-47, Asp-79, and Asp-80 together coordinate Ca(2+). A Lipoxygenase domain is found at Leu-119 to Ile-674. Position 272 is a phosphoserine; by MAPKAPK2 (Ser-272). Fe cation-binding residues include His-368 and His-373. The residue at position 524 (Ser-524) is a Phosphoserine; by PKA. 3 residues coordinate Fe cation: His-551, Asn-555, and Ile-674.

Belongs to the lipoxygenase family. Homodimer. Interacts with ALOX5AP and LTC4S. Interacts with COTL1, the interaction is required for stability and efficient catalytic activity. Interacts with PIK3R1; this interaction bridges ALOX5 with CD40 after CD40 ligation in B cells and leads to the production of reactive oxygen species (ROS). Interacts (via PLAT domain) with DICER1 (via Dicer dsRNA-binding fold domain); this interaction enhances arachidonate 5-lipoxygenase activity and modifies the miRNA precursor processing activity of DICER1. Requires Fe cation as cofactor. Serine phosphorylation by MAPKAPK2 is stimulated by arachidonic acid. Phosphorylation on Ser-524 by PKA has an inhibitory effect. Phosphorylation on Ser-272 prevents export from the nucleus. Phosphorylation at Ser-524 is stimulated by 8-bromo-3',5'-cyclic AMP or prostaglandin E2.

Its subcellular location is the cytoplasm. The protein localises to the nucleus matrix. It is found in the nucleus membrane. The protein resides in the perinuclear region. It localises to the cytosol. Its subcellular location is the nucleus envelope. The protein localises to the nucleus intermembrane space. It carries out the reaction (5Z,8Z,11Z,14Z)-eicosatetraenoate + O2 = leukotriene A4 + H2O. The catalysed reaction is 18-HEPE + O2 = (5S)-hydroperoxy-18-hydroxy-(7E,9E,11Z,14Z,16E)-eicosapentaenoate. The enzyme catalyses (18R)-hydroxy-(5Z,8Z,11Z,14Z,16E)-eicosapentaenoate + O2 = (5S)-hydroperoxy-(18R)-hydroxy-(6E,8Z,11Z,14Z,16E)-eicosapentaenoate. It catalyses the reaction (18S)-hydroxy-(5Z,8Z,11Z,14Z,16E)-eicosapentaenoate + O2 = (5S)-hydroperoxy-(18S)-hydroxy-(6E,8Z,11Z,14Z,16E)-eicosapentaenoate. It carries out the reaction (5S)-hydroperoxy-(18S)-hydroxy-(6E,8Z,11Z,14Z,16E)-eicosapentaenoate = (5S,6S)-epoxy-(18S)-hydroxy-(7E,9E,11Z,14Z,16E)-eicosapentaenoate + H2O. The catalysed reaction is (5S)-hydroperoxy-(18R)-hydroxy-(6E,8Z,11Z,14Z,16E)-eicosapentaenoate = (5S,6S)-epoxy-(18R)-hydroxy-(7E,9E,11Z,14Z,16E)-eicosapentaenoate + H2O. The enzyme catalyses (5S)-hydroperoxy-18-hydroxy-(7E,9E,11Z,14Z,16E)-eicosapentaenoate = (5S,6S)-epoxy-18-hydroxy-(7E,9E,11Z,14Z,16E)-eicosapentaenoate + H2O. It catalyses the reaction (5Z,8Z,11Z,14Z)-eicosatetraenoate + O2 = (5S)-hydroperoxy-(6E,8Z,11Z,14Z)-eicosatetraenoate. It carries out the reaction (15S)-hydroxy-(5Z,8Z,11Z,13E)-eicosatetraenoate + O2 = (5S)-hydroperoxy-(15S)-hydroxy-(6E,8Z,11Z,13E)-eicosatetraenoate. The catalysed reaction is (5S)-hydroperoxy-(6E,8Z,11Z,14Z)-eicosatetraenoate = leukotriene A4 + H2O. The enzyme catalyses (5Z,8Z,11Z,14Z)-eicosatetraenoate + O2 = (8S)-hydroperoxy-(5Z,9E,11Z,14Z)-eicosatetraenoate. It catalyses the reaction (5Z,8Z,11Z,14Z)-eicosatetraenoate + O2 = (12S)-hydroperoxy-(5Z,8Z,10E,14Z)-eicosatetraenoate. It carries out the reaction (5Z,8Z)-eicosadienoate + O2 = (5S)-hydroperoxy-(6E,8Z)-eicosadienoate. The catalysed reaction is (12S)-hydroxy-(5Z,8Z,10E,14Z)-eicosatetraenoate + O2 = (5S)-hydroperoxy-(12S)-hydroxy-(6E,8Z,10E,14Z)-eicosatetraenoate. The enzyme catalyses (5Z,8Z,11Z,14Z,17Z)-eicosapentaenoate + O2 = 5-hydroperoxy-(6E,8Z,11Z,14Z,17Z)-eicosapentaenoate. It catalyses the reaction (4Z,7Z,10Z,13Z,16Z,19Z)-docosahexaenoate + O2 = (14S)-hydroperoxy-(4Z,7Z,10Z,12E,16Z,19Z)-docosahexaenoate. It carries out the reaction (4Z,7Z,10Z,13Z,16Z,19Z)-docosahexaenoate + O2 = (7S)-hydroperoxy-(4Z,8E,10Z,13Z,16Z,19Z)-docosahexaenoate. The catalysed reaction is (4Z,7Z,10Z,13Z,16Z,19Z)-docosahexaenoate + O2 = (17S)-hydroperoxy-(4Z,7Z,10Z,13Z,15E,19Z)-docosahexaenoate. Its pathway is lipid metabolism; leukotriene A4 biosynthesis. Its activity is regulated as follows. Undergoes a sequential loss of the oxygenase and pseudoperoxidase activities which is dependent on the structural characteristics of the substrate for the reaction, on oxygen concentration and on exposure to phospholipids and calcium. 15-HETE and other 15-mono-hydroxyeicosanoids exhibit the highest inhibitory potencies in their capability of suppressing 5-lipoxygenation of arachidonic acid, whereas the other HETEs, (5S,15S)-dihydroxy-(6E,8Z,11Z,13E)-eicosatetraenoic acid (5,15-diHETE) as well as octadecanoids, are modest or poor inhibitors. The formation of (5S)-hydroperoxy-(15S)-hydroxy-(6E,8Z,11Z,13E)-eicosatetraenoate is strongly stimulated by either hydroperoxypolyenoic fatty acids or arachidonic acid. Arachidonate 5-lipoxygenase and leukotriene A4 synthase activities are allosterically increased by ATP. Its function is as follows. Catalyzes the oxygenation of arachidonate ((5Z,8Z,11Z,14Z)-eicosatetraenoate) to 5-hydroperoxyeicosatetraenoate (5-HPETE) followed by the dehydration to 5,6- epoxyeicosatetraenoate (Leukotriene A4/LTA4), the first two steps in the biosynthesis of leukotrienes, which are potent mediators of inflammation. Also catalyzes the oxygenation of arachidonate into 8-hydroperoxyicosatetraenoate (8-HPETE) and 12-hydroperoxyicosatetraenoate (12-HPETE). Displays lipoxin synthase activity being able to convert (15S)-HETE into a conjugate tetraene. Although arachidonate is the preferred substrate, this enzyme can also metabolize oxidized fatty acids derived from arachidonate such as (15S)-HETE, eicosapentaenoate (EPA) such as (18R)- and (18S)-HEPE or docosahexaenoate (DHA) which lead to the formation of specialized pro-resolving mediators (SPM) lipoxin and resolvins E and D respectively, therefore it participates in anti-inflammatory responses. Oxidation of DHA directly inhibits endothelial cell proliferation and sprouting angiogenesis via peroxisome proliferator-activated receptor gamma (PPARgamma). It does not catalyze the oxygenation of linoleic acid and does not convert (5S)-HETE to lipoxin isomers. In addition to inflammatory processes, it participates in dendritic cell migration, wound healing through an antioxidant mechanism based on heme oxygenase-1 (HO-1) regulation expression, monocyte adhesion to the endothelium via ITGAM expression on monocytes. Moreover, it helps establish an adaptive humoral immunity by regulating primary resting B cells and follicular helper T cells and participates in the CD40-induced production of reactive oxygen species (ROS) after CD40 ligation in B cells through interaction with PIK3R1 that bridges ALOX5 with CD40. May also play a role in glucose homeostasis, regulation of insulin secretion and palmitic acid-induced insulin resistance via AMPK. Can regulate bone mineralization and fat cell differentiation increases in induced pluripotent stem cells. The polypeptide is Polyunsaturated fatty acid 5-lipoxygenase (Homo sapiens (Human)).